Consider the following 274-residue polypeptide: 2,3,4,5-tetrahydropyridine-2,6-dicarboxylate N-succinyltransferase (274 aa).

The substrate site is built by Arg-104 and Asp-141.

This sequence belongs to the transferase hexapeptide repeat family. In terms of assembly, homotrimer.

The protein resides in the cytoplasm. It catalyses the reaction (S)-2,3,4,5-tetrahydrodipicolinate + succinyl-CoA + H2O = (S)-2-succinylamino-6-oxoheptanedioate + CoA. It functions in the pathway amino-acid biosynthesis; L-lysine biosynthesis via DAP pathway; LL-2,6-diaminopimelate from (S)-tetrahydrodipicolinate (succinylase route): step 1/3. This Shewanella amazonensis (strain ATCC BAA-1098 / SB2B) protein is 2,3,4,5-tetrahydropyridine-2,6-dicarboxylate N-succinyltransferase.